Consider the following 622-residue polypeptide: Sodium/potassium/calcium exchanger 4 (622 aa).

A signal peptide spans 1–38 (MALRGTLRPLKVRRRREMLPQQVGFVCAVLALVCCASG). Residues 39–97 (LFGSLGHKTASASKRVLPDTWRNRKLMAPVNGTQTAKNCTDPAIHEFPTDLFSNKERQH) are Extracellular-facing. N-linked (GlcNAc...) asparagine glycosylation is found at Asn69 and Asn76. The helical transmembrane segment at 98-118 (GAVLLHILGALYMFYALAIVC) threads the bilayer. Over 119–142 (DDFFVPSLEKICERLHLSEDVAGA) the chain is Cytoplasmic. The stretch at 139 to 179 (VAGATFMAAGSSTPELFASVIGVFITHGDVGVGTIVGSAVF) is one Alpha-1 repeat. Residues 143–163 (TFMAAGSSTPELFASVIGVFI) form a helical membrane-spanning segment. At 164 to 172 (THGDVGVGT) the chain is on the extracellular side. The chain crosses the membrane as a helical span at residues 173 to 193 (IVGSAVFNILCIIGVCGLFAG). Residues 194–200 (QVVRLTW) lie on the Cytoplasmic side of the membrane. A helical transmembrane segment spans residues 201–221 (WAVCRDSVYYTISVIVLIVFI). The Extracellular portion of the chain corresponds to 222–224 (YDE). A helical membrane pass occupies residues 225 to 245 (QIVWWEGLVLIILYVFYILIM). Topologically, residues 246-457 (KYNVKMQAFF…RWEKFFMVTF (212 aa)) are cytoplasmic. Positions 358–410 (ANGVSSKPLQNGRHENIENGNVPVENPEDPQQNQEQQPPPQPPPPEPEPVEAD) are disordered. Positions 380 to 393 (PVENPEDPQQNQEQ) are enriched in low complexity. A compositionally biased stretch (pro residues) spans 394–404 (QPPPQPPPPEP). A helical membrane pass occupies residues 458–478 (ITATLWIAVFSYIMVWLVTII). Position 479 (Gly479) is a topological domain, extracellular. A helical transmembrane segment spans residues 480–500 (YTLGIPDVIMGITFLAAGTSV). An Alpha-2 repeat occupies 495–526 (AAGTSVPDCMASLIVARQGLGDMAVSNTIGSN). The Cytoplasmic portion of the chain corresponds to 501–526 (PDCMASLIVARQGLGDMAVSNTIGSN). A helical membrane pass occupies residues 527–547 (VFDILVGLGVPWGLQTMVVNY). Residues 548–557 (GSTVKINSRG) are Extracellular-facing. Residues 558–578 (LVYSVVLLLGSVALTVLGIHL) form a helical membrane-spanning segment. Residues 579-586 (NKWRLDRK) are Cytoplasmic-facing. A helical membrane pass occupies residues 587–607 (LGVYVLVLYAIFLCFSIMIEF). The Extracellular portion of the chain corresponds to 608–622 (NVFTFVNLPMCREDD).

Belongs to the Ca(2+):cation antiporter (CaCA) (TC 2.A.19) family. SLC24A subfamily. In terms of tissue distribution, expressed abundantly in all regions of the brain, aorta, lung and thymus. Expressed at lower levels in the stomach and intestine.

It localises to the cell membrane. It is found in the cytoplasm. The catalysed reaction is Ca(2+)(out) + K(+)(out) + 4 Na(+)(in) = Ca(2+)(in) + K(+)(in) + 4 Na(+)(out). Calcium, potassium:sodium antiporter that transports 1 Ca(2+) and 1 K(+) in exchange for 4 Na(+). Controls the rapid response termination and proper regulation of adaptation in olfactory sensory neurons (OSNs) which subsequently influences how odor information is encoded and perceived. May play a role in calcium transport during amelogenesis. The sequence is that of Sodium/potassium/calcium exchanger 4 from Homo sapiens (Human).